Here is a 157-residue protein sequence, read N- to C-terminus: AM-toxin biosynthesis protein 15 (157 aa).

The interval 17–43 (RARHWDSKQGSSNSDVASGGSEVAGNS) is disordered.

It functions in the pathway mycotoxin biosynthesis. Functionally, part of the gene clusters that mediate the biosynthesis of AM-toxins, host-selective toxins (HSTs) causing Alternaria blotch on apple, a worldwide distributed disease. AM-toxins are cyclic depsipeptides containing the 3 residues 2-hydroxy-isovaleric acid (2-HIV), dehydroalanine, L-alanine which are common for all 3 AM-toxins I to III. The fourth precursor is L-alpha-amino-methoxyphenyl-valeric acid (L-Amv) for AM-toxin I, L-alpha-amino-phenyl-valeric acid (L-Apv) for AM-toxin II, and L-alpha-amino-hydroxyphenyl-valeric acid (L-Ahv) for AM-toxin III. AM-toxins have two target sites for affecting susceptible apple cells; they cause invagination of the plasma membrane and electrolyte loss and chloroplast disorganization. The non-ribosomal peptide synthetase AMT1 contains 4 catalytic modules and is responsible for activation of each residue in AM-toxin. The aldo-keto reductase AMT2 catalyzes the conversion of 2-keto-isovaleric acid (2-KIV) to 2-hydroxy-isovaleric acid (2-HIV), one of the precursor residues incorporated by AMT1 during AM-toxin biosynthesis, by reduction of its ketone to an alcohol. The cytochrome P450 monooxygenase AMT3 and the thioesterase AMT4 are also important for AM-toxin production, but their exact function within the AM-toxin biosynthesis are not known yet. Up to 21 proteins (including AMT1 to AMT4) are predicted to be involved in AM-toxin biosynthesis since their expression ishighly up-regulated in AM-toxin-producing cultures. The polypeptide is AM-toxin biosynthesis protein 15 (Alternaria alternata (Alternaria rot fungus)).